The primary structure comprises 203 residues: A-type ATP synthase subunit E (203 aa).

The protein belongs to the V-ATPase E subunit family. As to quaternary structure, has multiple subunits with at least A(3), B(3), C, D, E, F, H, I and proteolipid K(x).

It localises to the cell membrane. In terms of biological role, component of the A-type ATP synthase that produces ATP from ADP in the presence of a proton gradient across the membrane. The sequence is that of A-type ATP synthase subunit E from Methanococcus vannielii (strain ATCC 35089 / DSM 1224 / JCM 13029 / OCM 148 / SB).